The primary structure comprises 455 residues: Zinc finger protein ZPR1 homolog (455 aa).

2 consecutive C4-type zinc fingers follow at residues 28–60 and 247–279; these read CPVC…CPHC and CPNC…CDRC.

This sequence belongs to the ZPR1 family.

Its subcellular location is the nucleus. In Caenorhabditis elegans, this protein is Zinc finger protein ZPR1 homolog.